Reading from the N-terminus, the 127-residue chain is uncharacterized protein (127 aa).

Helical transmembrane passes span 42 to 62 (LLIS…IAFI) and 78 to 98 (GLPI…YYFL).

Its subcellular location is the membrane. This is an uncharacterized protein from Schizosaccharomyces pombe (strain 972 / ATCC 24843) (Fission yeast).